The primary structure comprises 181 residues: Transcriptional repressor NrdR (181 aa).

Residues Cys-3–Cys-34 fold into a zinc finger. Residues Leu-46–Asp-136 form the ATP-cone domain. The segment at Ala-148 to Arg-181 is disordered.

Belongs to the NrdR family. Zn(2+) is required as a cofactor.

In terms of biological role, negatively regulates transcription of bacterial ribonucleotide reductase nrd genes and operons by binding to NrdR-boxes. This Frankia casuarinae (strain DSM 45818 / CECT 9043 / HFP020203 / CcI3) protein is Transcriptional repressor NrdR.